The primary structure comprises 89 residues: Small ribosomal subunit protein uS17 (89 aa).

This sequence belongs to the universal ribosomal protein uS17 family. Part of the 30S ribosomal subunit.

One of the primary rRNA binding proteins, it binds specifically to the 5'-end of 16S ribosomal RNA. This chain is Small ribosomal subunit protein uS17, found in Ralstonia nicotianae (strain ATCC BAA-1114 / GMI1000) (Ralstonia solanacearum).